Reading from the N-terminus, the 264-residue chain is Phosphonoacetaldehyde hydrolase (264 aa).

Catalysis depends on Asp-9, which acts as the Nucleophile. Mg(2+) contacts are provided by Asp-9 and Ala-11. The Schiff-base intermediate with substrate role is filled by Lys-50. Mg(2+) is bound at residue Asp-183.

It belongs to the HAD-like hydrolase superfamily. PhnX family. As to quaternary structure, homodimer. Requires Mg(2+) as cofactor.

The catalysed reaction is phosphonoacetaldehyde + H2O = acetaldehyde + phosphate + H(+). Functionally, involved in phosphonate degradation. In Bacillus cereus (strain ZK / E33L), this protein is Phosphonoacetaldehyde hydrolase.